The chain runs to 230 residues: 2,3-bisphosphoglycerate-dependent phosphoglycerate mutase (230 aa).

Residues 8–15, 21–22, Arg-60, 87–90, Lys-98, 114–115, and 183–184 each bind substrate; these read RHGESEWN, TG, ERHY, RR, and GN. His-9 (tele-phosphohistidine intermediate) is an active-site residue. Glu-87 (proton donor/acceptor) is an active-site residue.

Belongs to the phosphoglycerate mutase family. BPG-dependent PGAM subfamily.

The enzyme catalyses (2R)-2-phosphoglycerate = (2R)-3-phosphoglycerate. It functions in the pathway carbohydrate degradation; glycolysis; pyruvate from D-glyceraldehyde 3-phosphate: step 3/5. Catalyzes the interconversion of 2-phosphoglycerate and 3-phosphoglycerate. The sequence is that of 2,3-bisphosphoglycerate-dependent phosphoglycerate mutase from Streptococcus pneumoniae (strain P1031).